The sequence spans 823 residues: Protein Jade-3 (823 aa).

The tract at residues Met1–Lys32 is disordered. Positions Ser8–Ser25 are enriched in low complexity. N6-acetyllysine occurs at positions 30 and 32. Ser85 is subject to Phosphoserine. A PHD-type 1 zinc finger spans residues Asp200 to Gly250. The C2HC pre-PHD-type zinc-finger motif lies at Tyr252 to Val286. Residues Leu310–Ser366 form a PHD-type 2 zinc finger. Disordered regions lie at residues Leu372–Leu395 and Lys542–Ile576. A compositionally biased stretch (low complexity) spans Asp561–Ser575. At Ser566 the chain carries Phosphoserine. An N6-acetyllysine modification is found at Lys601. At Ser608 the chain carries Phosphoserine. Positions Leu609–Cys630 are disordered. The residue at position 638 (Lys638) is an N6-acetyllysine. 2 stretches are compositionally biased toward polar residues: residues Ser650–Ala664 and Trp673–Ser684. The segment at Ser650 to Ser684 is disordered. Lys735 bears the N6-acetyllysine mark. The disordered stretch occupies residues Arg758–Arg823. Phosphoserine occurs at positions 774, 776, and 780. Residues Asp781–Gly809 show a composition bias toward basic and acidic residues.

It belongs to the JADE family. Component of the HBO1 complex composed at least of ING4 or ING5, KAT7/HBO1, MEAF6, and one of JADE1, JADE2 and JADE3. Ubiquitously expressed, with highest levels in placenta and uterus.

Its function is as follows. Scaffold subunit of some HBO1 complexes, which have a histone H4 acetyltransferase activity. The polypeptide is Protein Jade-3 (JADE3) (Homo sapiens (Human)).